A 122-amino-acid chain; its full sequence is Large ribosomal subunit protein uL14 (122 aa).

This sequence belongs to the universal ribosomal protein uL14 family. Part of the 50S ribosomal subunit. Forms a cluster with proteins L3 and L19. In the 70S ribosome, L14 and L19 interact and together make contacts with the 16S rRNA in bridges B5 and B8.

Functionally, binds to 23S rRNA. Forms part of two intersubunit bridges in the 70S ribosome. The protein is Large ribosomal subunit protein uL14 of Thermosipho melanesiensis (strain DSM 12029 / CIP 104789 / BI429).